Here is a 104-residue protein sequence, read N- to C-terminus: Replication factor A protein 3 (104 aa).

Belongs to the replication factor A protein 3 family. As to quaternary structure, component of the heterotrimeric canonical replication protein A complex (RPA).

It localises to the nucleus. Its function is as follows. As part of the replication protein A (RPA/RP-A), a single-stranded DNA-binding heterotrimeric complex, may play an essential role in DNA replication, recombination and repair. Binds and stabilizes single-stranded DNA intermediates, preventing complementary DNA reannealing and recruiting different proteins involved in DNA metabolism. This Schizosaccharomyces pombe (strain 972 / ATCC 24843) (Fission yeast) protein is Replication factor A protein 3 (ssb3).